Here is a 395-residue protein sequence, read N- to C-terminus: Dihydroorotate dehydrogenase (quinone), mitochondrial (395 aa).

The N-terminal 10 residues, 1–10 (MAWRQLKKRA), are a transit peptide targeting the mitochondrion; not cleaved. Residues 1–10 (MAWRQLKKRA) lie on the Mitochondrial matrix side of the membrane. Residues 11-30 (QDAMVILGGGGLLFASYLTA) traverse the membrane as a helical segment. Residues 31–395 (TGDEHFYAEL…TDAIGADHRR (365 aa)) lie on the Mitochondrial intermembrane side of the membrane. FMN is bound by residues 95–99 (AGFDK) and S119. K99 serves as a coordination point for substrate. 144 to 148 (NRYGF) provides a ligand contact to substrate. Residues N180 and N211 each coordinate FMN. Substrate is bound at residue 211 to 216 (NVSSPN). S214 serves as the catalytic Nucleophile. K254 and T282 together coordinate FMN. Residue 283–284 (NS) coordinates substrate. FMN-binding positions include G305, G334, and 355–356 (YT).

Belongs to the dihydroorotate dehydrogenase family. Type 2 subfamily. Monomer. Requires FMN as cofactor. Post-translationally, the uncleaved transit peptide is required for mitochondrial targeting and proper membrane integration.

Its subcellular location is the mitochondrion inner membrane. It catalyses the reaction (S)-dihydroorotate + a quinone = orotate + a quinol. It functions in the pathway pyrimidine metabolism; UMP biosynthesis via de novo pathway; orotate from (S)-dihydroorotate (quinone route): step 1/1. Its function is as follows. Catalyzes the conversion of dihydroorotate to orotate with quinone as electron acceptor. Required for UMP biosynthesis via de novo pathway. The chain is Dihydroorotate dehydrogenase (quinone), mitochondrial (DHODH) from Bos taurus (Bovine).